The sequence spans 31 residues: Cytochrome b6-f complex subunit 6 (31 aa).

The chain crosses the membrane as a helical span at residues 4–24; it reads ITSYFGFLLAALTITSALLIG.

The protein belongs to the PetL family. The 4 large subunits of the cytochrome b6-f complex are cytochrome b6, subunit IV (17 kDa polypeptide, PetD), cytochrome f and the Rieske protein, while the 4 small subunits are PetG, PetL, PetM and PetN. The complex functions as a dimer.

It is found in the plastid. The protein localises to the chloroplast thylakoid membrane. In terms of biological role, component of the cytochrome b6-f complex, which mediates electron transfer between photosystem II (PSII) and photosystem I (PSI), cyclic electron flow around PSI, and state transitions. PetL is important for photoautotrophic growth as well as for electron transfer efficiency and stability of the cytochrome b6-f complex. The chain is Cytochrome b6-f complex subunit 6 from Magnolia grandiflora (Southern magnolia).